Consider the following 541-residue polypeptide: Sialate O-acetylesterase (541 aa).

The N-terminal stretch at 1 to 23 is a signal peptide; sequence MVSPGPVFGIVLLIIARVSRSAG. N-linked (GlcNAc...) asparagine glycosylation is found at asparagine 107, asparagine 138, asparagine 188, asparagine 293, asparagine 356, asparagine 427, asparagine 448, and asparagine 462.

In terms of assembly, disulfide-linked heterodimer of a small subunit and a large subunit. Post-translationally, the two subunits are derived from a single precursor by proteolytic cleavage. In terms of processing, the lysosomal isoform is glycosylated. Highly expressed in liver, testis, and kidney, whereas skeletal muscle, adipose tissue, and heart have lower levels. As to expression, highest expression in brain and ovary and lower levels in liver and thymus.

The protein resides in the lysosome. Its subcellular location is the cytoplasm. The enzyme catalyses N-acetyl-9-O-acetylneuraminate + H2O = N-acetylneuraminate + acetate + H(+). It carries out the reaction an Ac-O-9-sialoglycoconjugate + H2O = a sialoglycoconjugate + acetate + H(+). Inhibited by diisopropyl fluorophosphate and diethyl-P-nitrophenyl phosphate. Functionally, catalyzes the removal of O-acetyl ester groups from position 9 of the free diacetylated sialate N-acetyl-9-O-acetylneuraminate (Neu5,9Ac2) in the cytosol and of the diacetylated sialate residues of sialylglycoconjugates in the lysosomes. Together with the sialate-O-acetyltransferase they regulate the balance of acetylated sialoglycoconjugates, key players in various processes such as cell-cell interactions, host-pathogen recognition, and tumor antigenicity. The chain is Sialate O-acetylesterase (Siae) from Mus musculus (Mouse).